We begin with the raw amino-acid sequence, 193 residues long: Inner membrane protein p54 (193 aa).

Residues 32 to 52 (YTILIAIVVLVIIIIVLIYLF) traverse the membrane as a helical segment. The segment at 84–126 (PQPGTSKPAGATTASVGKPVTGRPATNRPVTDRPATNNPVTDR) is disordered. 4 repeat units span residues 135–138 (AAAS), 139–142 (AAAS), 143–146 (AAAS), and 147–150 (AAAS). The interval 135 to 150 (AAASAAASAAASAAAS) is 4 X 4 AA tandem repeats of A-A-A-S. An interaction with host DYNLL1 region spans residues 159-171 (YTTVTTQNTASQT).

It belongs to the asfivirus envelope protein p54 family. In terms of assembly, interacts with the host light chain cytoplasmic dynein DYNLL1; this interaction is critical for intracellular microtubule-dependent virus transport toward viral factories.

It is found in the virion membrane. It localises to the host cytoplasm. Its subcellular location is the host cytoskeleton. The protein localises to the host endoplasmic reticulum membrane. Inner envelope protein involved, through its interaction with host dynein, in the intracellular microtubule-dependent transport of viral capsid toward viral factories. Seems to induce caspase-3 activation and apoptosis. Plays a role in virion morphogenesis by recruiting and transforming the host ER membranes into the precursors of the viral envelope. Involved in virus attachment to the host cell. The protein is Inner membrane protein p54 of Ornithodoros (relapsing fever ticks).